Here is a 213-residue protein sequence, read N- to C-terminus: Thymidylate kinase (213 aa).

ATP is bound at residue 10–17; it reads GLEGAGKT.

Belongs to the thymidylate kinase family.

The catalysed reaction is dTMP + ATP = dTDP + ADP. Phosphorylation of dTMP to form dTDP in both de novo and salvage pathways of dTTP synthesis. The sequence is that of Thymidylate kinase from Escherichia coli O1:K1 / APEC.